The chain runs to 247 residues: Homeobox-leucine zipper protein HOX15 (247 aa).

The interval 1 to 44 is disordered; sequence MAQDDEDVGLALGLSLGSGGHRRQRESRDEAPSSAAASLLTLRL. A compositionally biased stretch (low complexity) spans 32 to 44; sequence PSSAAASLLTLRL. Residues 91–150 constitute a DNA-binding region (homeobox); sequence NSRKKLRLSKEQSALLEDRFKEHSTLNPKQKVALAKQLNLRPRQVEVWFQNRRARTKLKQ. Residues 149 to 193 are leucine-zipper; that stretch reads KQTEVDCELLKRCCETLTEENRRLHRELQQLRALTHSTAAGFFMA. Residues 221–247 form a disordered region; it reads SPTAAADRTNKPTAPHLFSPFAKSAAC.

Belongs to the HD-ZIP homeobox family. Class II subfamily. Expressed in seedlings, stems, leaf blades and panicles.

The protein localises to the nucleus. Probable transcription factor. This is Homeobox-leucine zipper protein HOX15 (HOX15) from Oryza sativa subsp. japonica (Rice).